The sequence spans 158 residues: 2-C-methyl-D-erythritol 2,4-cyclodiphosphate synthase (158 aa).

A divalent metal cation contacts are provided by aspartate 9 and histidine 11. 4-CDP-2-C-methyl-D-erythritol 2-phosphate is bound by residues 9-11 (DVH) and 35-36 (HS). Histidine 43 is a binding site for a divalent metal cation. 4-CDP-2-C-methyl-D-erythritol 2-phosphate is bound by residues 57-59 (DIG), 62-66 (FPDTD), 133-136 (TTTE), phenylalanine 140, and arginine 143.

This sequence belongs to the IspF family. In terms of assembly, homotrimer. A divalent metal cation is required as a cofactor.

The catalysed reaction is 4-CDP-2-C-methyl-D-erythritol 2-phosphate = 2-C-methyl-D-erythritol 2,4-cyclic diphosphate + CMP. It functions in the pathway isoprenoid biosynthesis; isopentenyl diphosphate biosynthesis via DXP pathway; isopentenyl diphosphate from 1-deoxy-D-xylulose 5-phosphate: step 4/6. Involved in the biosynthesis of isopentenyl diphosphate (IPP) and dimethylallyl diphosphate (DMAPP), two major building blocks of isoprenoid compounds. Catalyzes the conversion of 4-diphosphocytidyl-2-C-methyl-D-erythritol 2-phosphate (CDP-ME2P) to 2-C-methyl-D-erythritol 2,4-cyclodiphosphate (ME-CPP) with a corresponding release of cytidine 5-monophosphate (CMP). The sequence is that of 2-C-methyl-D-erythritol 2,4-cyclodiphosphate synthase from Actinobacillus pleuropneumoniae serotype 7 (strain AP76).